The sequence spans 178 residues: Interleukin-10 (178 aa).

An N-terminal signal peptide occupies residues 1 to 18 (MHSSALLCCLVFLTGVRA). 2 cysteine pairs are disulfide-bonded: Cys30–Cys126 and Cys80–Cys132. N-linked (GlcNAc...) asparagine glycosylation occurs at Asn134.

It belongs to the IL-10 family. As to quaternary structure, homodimer. Interacts with IL10RA and IL10RB.

The protein resides in the secreted. In terms of biological role, major immune regulatory cytokine that acts on many cells of the immune system where it has profound anti-inflammatory functions, limiting excessive tissue disruption caused by inflammation. Mechanistically, IL10 binds to its heterotetrameric receptor comprising IL10RA and IL10RB leading to JAK1 and STAT2-mediated phosphorylation of STAT3. In turn, STAT3 translocates to the nucleus where it drives expression of anti-inflammatory mediators. Targets antigen-presenting cells (APCs) such as macrophages and monocytes and inhibits their release of pro-inflammatory cytokines including granulocyte-macrophage colony-stimulating factor /GM-CSF, granulocyte colony-stimulating factor/G-CSF, IL-1 alpha, IL-1 beta, IL-6, IL-8 and TNF-alpha. Also interferes with antigen presentation by reducing the expression of MHC-class II and co-stimulatory molecules, thereby inhibiting their ability to induce T cell activation. In addition, controls the inflammatory response of macrophages by reprogramming essential metabolic pathways including mTOR signaling. In Saimiri sciureus (Common squirrel monkey), this protein is Interleukin-10 (IL10).